A 181-amino-acid chain; its full sequence is MFKKFDEKESVSNCIQLKTSVIKGIKSQLTEQFPGIEPWLNQIMPKKDPVKIVRCHEHMEILTVNGELLFFRQRKGPFYPTLRLLHKYPFILPHQQVDKGAIKFVLSGANIMCPGLTSPGAKLYTAAVDTIVAVMAEGKEHALCVGVMKMAAADIEKINKGIGIENIHYLNDGLWHMKTYK.

In terms of domain architecture, PUA spans 92–171 (LPHQQVDKGA…IGIENIHYLN (80 aa)).

The protein belongs to the MCTS1 family.

The protein resides in the cytoplasm. This is Malignant T-cell-amplified sequence 2 from Mus musculus (Mouse).